A 426-amino-acid chain; its full sequence is Amino acid transporter AVT1H (426 aa).

11 consecutive transmembrane segments (helical) span residues 34–54 (SFLHSVINMVGMLIGLGQLSM), 55–75 (PYAVESGGWMSIFLLISFGIL), 110–130 (LIVCLFIYLEIFMALVSYTIS), 148–168 (HFPAAKLTAVAVAIALPSLWI), 182–202 (ILMSAIIFGSVVYTAIFGGVI), 215–235 (IPTVSGIYLFSFGGHIVFPNL), 248–268 (VSIVSFATVTALYGALAITGA), 292–312 (IALWATVLTPMTKYALEFAPL), 340–360 (LLLVILALALTVPYFGYVLSL), 363–383 (SLVSVTIAVTLPSAFYLKICW), and 392–412 (AANLGFVVLGCVLGVLGSFES).

The protein belongs to the amino acid/polyamine transporter 2 family. Amino acid/auxin permease (AAAP) (TC 2.A.18.5) subfamily.

Its subcellular location is the membrane. The sequence is that of Amino acid transporter AVT1H from Arabidopsis thaliana (Mouse-ear cress).